The sequence spans 179 residues: MSKKDKKEEIKEEVEATEPTTEESVEEVAEETSENKELQEALERAEDFENKYLRAHAEMQNIQRRANEERQSLQRYRSQDLAKAILPSLDNLERALAVEGLTDDVKKGLEMVQESLIQALKEEGVEEVELENFDPNLHMAVQTLDADDDHPADSIAQVLQKGYQLHERLLRPAMVVVYN.

Positions 1 to 14 are enriched in basic and acidic residues; it reads MSKKDKKEEIKEEV. A disordered region spans residues 1 to 40; it reads MSKKDKKEEIKEEVEATEPTTEESVEEVAEETSENKELQE. A compositionally biased stretch (acidic residues) spans 15–32; that stretch reads EATEPTTEESVEEVAEET.

It belongs to the GrpE family. As to quaternary structure, homodimer.

Its subcellular location is the cytoplasm. Its function is as follows. Participates actively in the response to hyperosmotic and heat shock by preventing the aggregation of stress-denatured proteins, in association with DnaK and GrpE. It is the nucleotide exchange factor for DnaK and may function as a thermosensor. Unfolded proteins bind initially to DnaJ; upon interaction with the DnaJ-bound protein, DnaK hydrolyzes its bound ATP, resulting in the formation of a stable complex. GrpE releases ADP from DnaK; ATP binding to DnaK triggers the release of the substrate protein, thus completing the reaction cycle. Several rounds of ATP-dependent interactions between DnaJ, DnaK and GrpE are required for fully efficient folding. The chain is Protein GrpE from Streptococcus mutans serotype c (strain ATCC 700610 / UA159).